The following is a 261-amino-acid chain: Leukocyte receptor cluster member 1 homolog (261 aa).

A disordered region spans residues 1–261; sequence MNILPKKSWH…PRQQNPTPAH (261 aa). The span at 12 to 38 shows a compositional bias: basic and acidic residues; sequence RNKDNVARVRRDEAQAREEEKERERRV. Residues 16–46 adopt a coiled-coil conformation; sequence NVARVRRDEAQAREEEKERERRVLLAQQEAR. S59 bears the Phosphoserine mark. Basic and acidic residues-rich tracts occupy residues 78 to 109, 147 to 163, and 171 to 211; these read LFRELLEERKGVPRGNKEHEEEKRREKERQEK, PDEKIKNRLDPLKEMQK, and SSES…RARA. Residues 192–222 adopt a coiled-coil conformation; it reads SLEKLRAERLQREAAERARAEALLARVQGQV. A compositionally biased stretch (low complexity) spans 212 to 228; the sequence is EALLARVQGQVSQQGQV. S242 is subject to Phosphoserine.

This is Leukocyte receptor cluster member 1 homolog (Leng1) from Mus musculus (Mouse).